Consider the following 90-residue polypeptide: UPF0297 protein lwe1516 (90 aa).

Belongs to the UPF0297 family.

The chain is UPF0297 protein lwe1516 from Listeria welshimeri serovar 6b (strain ATCC 35897 / DSM 20650 / CCUG 15529 / CIP 8149 / NCTC 11857 / SLCC 5334 / V8).